The following is an 839-amino-acid chain: Translation initiation factor IF-2 (839 aa).

Composition is skewed to basic and acidic residues over residues 1-12 (MSDNEIKNETPK) and 57-67 (AEAKAQEKQAA). 2 disordered regions span residues 1-21 (MSDN…RRTK) and 57-244 (AEAK…GASL). Over residues 68–90 (EKAAQAQTEAKAQTEQACTTKKT) the composition is skewed to low complexity. 3 stretches are compositionally biased toward basic and acidic residues: residues 104-167 (PKTE…REET), 185-199 (READ…EGNR), and 212-233 (GGRE…DIKG). Residues 338-508 (TRAPVVTIMG…ILQSEVLELT (171 aa)) enclose the tr-type G domain. A G1 region spans residues 347-354 (GHVDHGKT). 347–354 (GHVDHGKT) lines the GTP pocket. The interval 372 to 376 (GITQH) is G2. Residues 394–397 (DTPG) are G3. Residues 394–398 (DTPGH) and 448–451 (NKID) each bind GTP. Residues 448–451 (NKID) are G4. Positions 484-486 (SAK) are G5.

The protein belongs to the TRAFAC class translation factor GTPase superfamily. Classic translation factor GTPase family. IF-2 subfamily.

It localises to the cytoplasm. Its function is as follows. One of the essential components for the initiation of protein synthesis. Protects formylmethionyl-tRNA from spontaneous hydrolysis and promotes its binding to the 30S ribosomal subunits. Also involved in the hydrolysis of GTP during the formation of the 70S ribosomal complex. In Haemophilus ducreyi (strain 35000HP / ATCC 700724), this protein is Translation initiation factor IF-2.